The chain runs to 936 residues: Aftiphilin (936 aa).

The disordered stretch occupies residues 1–36; that stretch reads MEPDIIRMYSSSPPPLDNGAEDDDDDEFGEFGGFSE. Positions 1-523 are interaction with AP1G1, AP1G2, GGA1 and GGA3; that stretch reads MEPDIIRMYS…ARKSSGTGTE (523 aa). The span at 19–29 shows a compositional bias: acidic residues; that stretch reads GAEDDDDDEFG. The WXXF motif 1 signature appears at 28–31; it reads FGEF. Residue Ser-151 is modified to Phosphoserine. 2 disordered regions span residues 197 to 216 and 374 to 409; these read TDDLDNVADSKGRKPLSTHS and KTSDDEVGSPKEESRKFTNFQSPNIDPTEENDLDDS. Positions 374-389 are enriched in basic and acidic residues; the sequence is KTSDDEVGSPKEESRK. The interval 386 to 610 is interaction with AP1G1; it reads ESRKFTNFQS…EAWQSHRTDE (225 aa). Residue Ser-395 is modified to Phosphoserine. The WXXF motif 2 signature appears at 432–435; that stretch reads FGDF. The WXXF motif 3 (partial) motif lies at 436–438; it reads GDF. The short motif at 478–481 is the WXXF motif 4 element; it reads FGEF. Ser-518 is subject to Phosphoserine. The segment at 589-637 is disordered; sequence GDQQATESHHRKEAWQSHRTDENIDTPGTPKTHSVPSATSKGAVASGHL. The span at 595–610 shows a compositional bias: basic and acidic residues; the sequence is ESHHRKEAWQSHRTDE. Thr-617 is subject to Phosphothreonine. A compositionally biased stretch (polar residues) spans 617–628; that stretch reads TPKTHSVPSATS. The CLTCL1/Clathrin-binding motif lies at 716-718; it reads YQW. Residues 825–829 are clathrin-binding; sequence LLNLD.

As to quaternary structure, self-associates. Interacts with GGA1 (via GAE domain). Interacts with GGA3 (via GAE domain), AP1G1 (via GAE domain) and AP1G2 (via GAE domain). Component of the aftiphilin/p200/gamma-synergin complex, at least composed of AFTPH/aftiphilin, HEATR5B/p200a and SYNRG/gamma-synergin, which plays a role in the AP1G1/AP-1-mediated protein trafficking from early to recycling endosomes. Within the complex interacts with HEATR5B/p200a and SYNRG/gamma-synergin; the interactions are direct. Interacts with AP1G1/AP-1; the interaction is required to recruit AFTPH/aftiphilin to the perinuclear region of the cell. Interacts with CLTCL1/Clathrin.

The protein resides in the cytoplasm. Its subcellular location is the perinuclear region. It localises to the cytoplasmic vesicle. The protein localises to the clathrin-coated vesicle. Its function is as follows. Component of clathrin-coated vesicles. Component of the aftiphilin/p200/gamma-synergin complex, which plays roles in AP1G1/AP-1-mediated protein trafficking including the trafficking of transferrin from early to recycling endosomes, and the membrane trafficking of furin and the lysosomal enzyme cathepsin D between the trans-Golgi network (TGN) and endosomes. The sequence is that of Aftiphilin (AFTPH) from Homo sapiens (Human).